Here is a 160-residue protein sequence, read N- to C-terminus: uncharacterized protein (160 aa).

Positions 1–31 (METEKPNTDVKVAQDLEKLKLDEKHKDEKKD) are enriched in basic and acidic residues. Residues 1-160 (METEKPNTDV…DKKDKEHKKE (160 aa)) are disordered. Residues 20–111 (KLDEKHKDEK…KSKLEGKKDK (92 aa)) are a coiled coil. Basic residues predominate over residues 32–42 (KKDKKDKKDKK). Over residues 43-160 (DKKEKTPEEI…DKKDKEHKKE (118 aa)) the composition is skewed to basic and acidic residues.

This is an uncharacterized protein from Dictyostelium discoideum (Social amoeba).